Here is a 585-residue protein sequence, read N- to C-terminus: Glycerol-3-phosphate acyltransferase 1 (585 aa).

Helical transmembrane passes span 126–146, 334–354, and 356–376; these read FFPYFMLVAFEGGSIIRAILL, TPLATLAMFIWLPIGFLLAVF, and ISVGVFLPYHVANFLASMSGV. An HXXXXD motif motif is present at residues 403-408; it reads HRTLLD.

This sequence belongs to the GPAT/DAPAT family. In terms of tissue distribution, highly expressed in developing siliques and flower buds. Weakly or not expressed in roots, seedlings and leaves.

It localises to the membrane. Its subcellular location is the mitochondrion. It catalyses the reaction sn-glycerol 3-phosphate + an acyl-CoA = a 1-acyl-sn-glycero-3-phosphate + CoA. It participates in phospholipid metabolism; CDP-diacylglycerol biosynthesis; CDP-diacylglycerol from sn-glycerol 3-phosphate: step 1/3. Esterifies acyl-group from acyl-ACP to the sn-1 position of glycerol-3-phosphate, an essential step in glycerolipid biosynthesis. Involved in pollen development, by being required for tapetum differentiation and male fertility. In addition to the sporophytic effect, it also exerts a gametophytic effect on pollen performance. In Arabidopsis thaliana (Mouse-ear cress), this protein is Glycerol-3-phosphate acyltransferase 1 (GPAT1).